Reading from the N-terminus, the 353-residue chain is Casein kinase II subunit alpha (353 aa).

In terms of domain architecture, Protein kinase spans 39 to 324 (YQLVRKLGRG…AREAMDHPYF (286 aa)). ATP contacts are provided by residues 45–53 (LGRGKYSEV) and Lys68. The active-site Proton acceptor is Asp156. The interval 334 to 353 (MVSSNSPTPNALQGPISTTE) is disordered.

Belongs to the protein kinase superfamily. Ser/Thr protein kinase family. CK2 subfamily. As to quaternary structure, tetramer of two alpha and two beta chains.

It catalyses the reaction L-seryl-[protein] + ATP = O-phospho-L-seryl-[protein] + ADP + H(+). It carries out the reaction L-threonyl-[protein] + ATP = O-phospho-L-threonyl-[protein] + ADP + H(+). Casein kinases are operationally defined by their preferential utilization of acidic proteins such as caseins as substrates. The alpha chain contains the catalytic site. May participate in Wnt signaling. This Spodoptera frugiperda (Fall armyworm) protein is Casein kinase II subunit alpha.